Here is a 295-residue protein sequence, read N- to C-terminus: GTPase Era (295 aa).

The Era-type G domain maps to 7–176 (KTVSVCIIGR…ITSKAKIAPW (170 aa)). The segment at 15–22 (GRPNSGKS) is G1. 15–22 (GRPNSGKS) is a GTP binding site. Residues 41-45 (QTTRS) form a G2 region. A G3 region spans residues 62–65 (DTPG). GTP is bound by residues 62 to 66 (DTPGI) and 124 to 127 (NKID). The segment at 124 to 127 (NKID) is G4. The segment at 152–154 (ISA) is G5. The KH type-2 domain occupies 204-281 (LQQELPYKLT…HLFLFVKVQE (78 aa)).

Belongs to the TRAFAC class TrmE-Era-EngA-EngB-Septin-like GTPase superfamily. Era GTPase family. As to quaternary structure, monomer.

It localises to the cytoplasm. The protein localises to the cell inner membrane. Functionally, an essential GTPase that binds both GDP and GTP, with rapid nucleotide exchange. Plays a role in 16S rRNA processing and 30S ribosomal subunit biogenesis and possibly also in cell cycle regulation and energy metabolism. This Rickettsia bellii (strain RML369-C) protein is GTPase Era.